The sequence spans 562 residues: Calcium-dependent protein kinase 5 (562 aa).

Positions 118–372 (ELDKYKLGKG…VHKIVNHKWF (255 aa)) constitute a Protein kinase domain. ATP-binding positions include 124–132 (LGKGSYGNV) and lysine 147. The active-site Proton acceptor is aspartate 238. Residues 394-402 (KFKKFHKLC) carry the J domain autoinhibitory motif motif. Residues 394-429 (KFKKFHKLCKIKKLAITCIAYQLNKKKFGKMKKTFE) are j domain. Positions 403–412 (KIKKLAITCI) match the J domain EF-hand interaction motif motif. EF-hand domains follow at residues 419-453 (KKFGKMKKTFEAFDHNGDGVLTISEIFQCLKVGDN), 454-489 (EIDRDLYYLLKQLDTDGNGLIDYTEFLAACLDHSIL), 490-525 (EQDAVCRNAFKIFDANGDGIITKDELLNVLSFSNDQ), and 528-562 (FSKEIIENVIKEVDANNDGYIDYDEFYKMMSGRQS). 17 residues coordinate Ca(2+): aspartate 432, asparagine 434, aspartate 436, glutamate 443, aspartate 467, aspartate 469, asparagine 471, glutamate 478, aspartate 503, asparagine 505, aspartate 507, glutamate 514, aspartate 541, asparagine 543, aspartate 545, tyrosine 547, and glutamate 552.

It belongs to the protein kinase superfamily. Ser/Thr protein kinase family. CDPK subfamily. Requires Mg(2+) as cofactor. In terms of processing, may be palmitoylated. Autophosphorylated in vitro.

The protein resides in the cytoplasm. Its subcellular location is the cytoplasmic vesicle. It localises to the secretory vesicle. It is found in the microneme membrane. The protein localises to the cell membrane. The catalysed reaction is L-seryl-[protein] + ATP = O-phospho-L-seryl-[protein] + ADP + H(+). The enzyme catalyses L-threonyl-[protein] + ATP = O-phospho-L-threonyl-[protein] + ADP + H(+). Activated by calcium. Upon calcium binding to the EF-hand domains, the C-terminus of the junction domain (J domain) undergoes a conformational change which results in the dissociation of the pseudo-substrate inhibitory motif from the catalytic domain. This, in turn, may facilitate the autophosphorylation of the activation loop at Thr-278, which leads to the kinase activation. Its function is as follows. Calcium-dependent protein kinase which acts as a sensor and effector of intracellular Ca(2+) levels probably in part downstream of cGMP-activated PKG kinase. Plays a central role in host erythrocytes and hepatocytes infection cycles. During the liver stage, involved in sporozoite motility and thus in sporozoite invasion of host hepatocytes, probably together with CDPK1 and CDPK4. Involved in merosome egress from host hepatocytes, probably together with CDPK4. Required for the release of hepatic merozoites from merosomes in the host blood stream. During the asexual blood stage, required for merozoite egress from host erythrocytes by triggering microneme secretion. Phosphorylates transporter NPT1 at late schizont stage. The polypeptide is Calcium-dependent protein kinase 5 (Plasmodium berghei (strain Anka)).